Consider the following 307-residue polypeptide: Small ribosomal subunit protein uS5m (307 aa).

The N-terminal 13 residues, Met-1–Leu-13, are a transit peptide targeting the mitochondrion. Residues Leu-144–Ile-208 enclose the S5 DRBM domain.

Belongs to the universal ribosomal protein uS5 family. As to quaternary structure, component of the mitochondrial small ribosomal subunit (mt-SSU). Mature yeast 74S mitochondrial ribosomes consist of a small (37S) and a large (54S) subunit. The 37S small subunit contains a 15S ribosomal RNA (15S mt-rRNA) and 34 different proteins. The 54S large subunit contains a 21S rRNA (21S mt-rRNA) and 46 different proteins. uS3m, uS4m and uS5m form the narrow entry site of the mRNA channel.

Its subcellular location is the mitochondrion. Functionally, component of the mitochondrial ribosome (mitoribosome), a dedicated translation machinery responsible for the synthesis of mitochondrial genome-encoded proteins, including at least some of the essential transmembrane subunits of the mitochondrial respiratory chain. The mitoribosomes are attached to the mitochondrial inner membrane and translation products are cotranslationally integrated into the membrane. The polypeptide is Small ribosomal subunit protein uS5m (MRPS5) (Saccharomyces cerevisiae (strain ATCC 204508 / S288c) (Baker's yeast)).